Reading from the N-terminus, the 153-residue chain is MPLLLSGRGFRRELESAGCMAVFAPLEGGAETRLLRRLRGAGYRTQLSSARGLGDPEVFLFQKHGIRPPHLGHQSVGRGAAVGEVQEVMPLLGESMLGTKPVVLWLLEGQVLSRSELSALCDLCRREPRLKVVVEMGGARSLRWQPLKELLSN.

Belongs to the complex I NdhN subunit family. In terms of assembly, NDH-1 can be composed of about 15 different subunits; different subcomplexes with different compositions have been identified which probably have different functions.

The protein resides in the cellular thylakoid membrane. The enzyme catalyses a plastoquinone + NADH + (n+1) H(+)(in) = a plastoquinol + NAD(+) + n H(+)(out). It carries out the reaction a plastoquinone + NADPH + (n+1) H(+)(in) = a plastoquinol + NADP(+) + n H(+)(out). Functionally, NDH-1 shuttles electrons from an unknown electron donor, via FMN and iron-sulfur (Fe-S) centers, to quinones in the respiratory and/or the photosynthetic chain. The immediate electron acceptor for the enzyme in this species is believed to be plastoquinone. Couples the redox reaction to proton translocation, and thus conserves the redox energy in a proton gradient. Cyanobacterial NDH-1 also plays a role in inorganic carbon-concentration. The chain is NAD(P)H-quinone oxidoreductase subunit N from Synechococcus sp. (strain CC9311).